A 117-amino-acid chain; its full sequence is Prefoldin subunit beta (117 aa).

It belongs to the prefoldin subunit beta family. As to quaternary structure, heterohexamer of two alpha and four beta subunits.

It is found in the cytoplasm. Functionally, molecular chaperone capable of stabilizing a range of proteins. Seems to fulfill an ATP-independent, HSP70-like function in archaeal de novo protein folding. The protein is Prefoldin subunit beta of Pyrococcus furiosus (strain ATCC 43587 / DSM 3638 / JCM 8422 / Vc1).